The sequence spans 257 residues: Nopaline permease ATP-binding protein P (257 aa).

The region spanning 8 to 253 is the ABC transporter domain; that stretch reads LVAEDVHKNF…PTSPRCRAFL (246 aa). 40–47 serves as a coordination point for ATP; that stretch reads GSSGSGKS.

It belongs to the ABC transporter superfamily.

It is found in the cell inner membrane. Functionally, component of the nopaline active transport system probably consisting of four subunits: Q, M, P and T. This system is also capable of transporting octopine provided that catabolic functions are induced with nopaline. The sequence is that of Nopaline permease ATP-binding protein P (nocP) from Agrobacterium fabrum (strain C58 / ATCC 33970) (Agrobacterium tumefaciens (strain C58)).